Consider the following 462-residue polypeptide: MTLPINNNIFTVSRLNKTVRQLLEMEMGRIWISAEISNFTQPASGHWYFTLKDTHAQIRAAMFRGQNTKVTFRPQHGQQVLVRATITLYEPRGDYQLIVESMQPAGDGLLQQQFELLKQKLSAEGLFDALHKKPLPTPAKQIGVITSSTGAALHDILNILRRRDPSLPIIIYPTAVQGAEAPMQIVHAIELANRRKECDVLIVGRGGGSLEDLWAFNDERVARAIFASDIPIVSAVGHETDVTIADFIADLRAPTPSAAAELISRNKLELLRQLQSQQQRLEMAMDYYLAKKLRALTQLHHRLQQQHPHLRLARQQNVLATTKQRLVTSFQRLLQTKQNQHTQLQKRLNYQEPSPQIQALLRQQQQLIYRMRESISQQLARQREQFAISCSRLESVSPLATLSRGYSISEVASGDVLKNTKQVKKGDTLKTRVEDGWITSEVINTQKIPAKRKPAPKSKSSI.

This sequence belongs to the XseA family. As to quaternary structure, heterooligomer composed of large and small subunits.

It is found in the cytoplasm. It catalyses the reaction Exonucleolytic cleavage in either 5'- to 3'- or 3'- to 5'-direction to yield nucleoside 5'-phosphates.. Its function is as follows. Bidirectionally degrades single-stranded DNA into large acid-insoluble oligonucleotides, which are then degraded further into small acid-soluble oligonucleotides. The sequence is that of Exodeoxyribonuclease 7 large subunit from Proteus mirabilis (strain HI4320).